Reading from the N-terminus, the 224-residue chain is 7-cyano-7-deazaguanine synthase (224 aa).

An ATP-binding site is contributed by L8 to I18. Zn(2+)-binding residues include C186, C196, C199, and C202.

The protein belongs to the QueC family. Requires Zn(2+) as cofactor.

It catalyses the reaction 7-carboxy-7-deazaguanine + NH4(+) + ATP = 7-cyano-7-deazaguanine + ADP + phosphate + H2O + H(+). The protein operates within purine metabolism; 7-cyano-7-deazaguanine biosynthesis. Functionally, catalyzes the ATP-dependent conversion of 7-carboxy-7-deazaguanine (CDG) to 7-cyano-7-deazaguanine (preQ(0)). This Xanthomonas campestris pv. campestris (strain 8004) protein is 7-cyano-7-deazaguanine synthase.